Reading from the N-terminus, the 465-residue chain is Probable glycine dehydrogenase (decarboxylating) subunit 1 (465 aa).

Belongs to the GcvP family. N-terminal subunit subfamily. As to quaternary structure, the glycine cleavage system is composed of four proteins: P, T, L and H. In this organism, the P 'protein' is a heterodimer of two subunits.

The enzyme catalyses N(6)-[(R)-lipoyl]-L-lysyl-[glycine-cleavage complex H protein] + glycine + H(+) = N(6)-[(R)-S(8)-aminomethyldihydrolipoyl]-L-lysyl-[glycine-cleavage complex H protein] + CO2. The glycine cleavage system catalyzes the degradation of glycine. The P protein binds the alpha-amino group of glycine through its pyridoxal phosphate cofactor; CO(2) is released and the remaining methylamine moiety is then transferred to the lipoamide cofactor of the H protein. The protein is Probable glycine dehydrogenase (decarboxylating) subunit 1 of Aeropyrum pernix (strain ATCC 700893 / DSM 11879 / JCM 9820 / NBRC 100138 / K1).